A 206-amino-acid chain; its full sequence is uncharacterized protein (206 aa).

A YrdC-like domain is found at Q14–G200.

Belongs to the SUA5 family.

This is an uncharacterized protein from Escherichia coli O6:H1 (strain CFT073 / ATCC 700928 / UPEC).